The primary structure comprises 61 residues: Defensin-like peptide TXKs2 (61 aa).

The first 19 residues, 1–19 (MTYAILIIVSLLLISDRIS), serve as a signal peptide directing secretion. The propeptide occupies 20–22 (NVV). 3 disulfide bridges follow: Cys-26/Cys-47, Cys-33/Cys-56, and Cys-37/Cys-58.

Belongs to the invertebrate defensin family. Expressed by the venom gland.

It localises to the secreted. Its function is as follows. Antibacterial protein. The polypeptide is Defensin-like peptide TXKs2 (Olivierus martensii (Manchurian scorpion)).